The chain runs to 409 residues: Serine/threonine transporter SstT (409 aa).

9 consecutive transmembrane segments (helical) span residues L17 to A37, F49 to I69, I83 to F103, A142 to F162, V180 to A200, L218 to F238, G301 to V321, V331 to I351, and L357 to I377.

The protein belongs to the dicarboxylate/amino acid:cation symporter (DAACS) (TC 2.A.23) family.

It localises to the cell inner membrane. It carries out the reaction L-serine(in) + Na(+)(in) = L-serine(out) + Na(+)(out). The enzyme catalyses L-threonine(in) + Na(+)(in) = L-threonine(out) + Na(+)(out). In terms of biological role, involved in the import of serine and threonine into the cell, with the concomitant import of sodium (symport system). This Pseudomonas aeruginosa (strain UCBPP-PA14) protein is Serine/threonine transporter SstT.